Consider the following 132-residue polypeptide: Small ribosomal subunit protein uS8 (132 aa).

The protein belongs to the universal ribosomal protein uS8 family. Part of the 30S ribosomal subunit. Contacts proteins S5 and S12.

Functionally, one of the primary rRNA binding proteins, it binds directly to 16S rRNA central domain where it helps coordinate assembly of the platform of the 30S subunit. The sequence is that of Small ribosomal subunit protein uS8 (rpsH) from Caldanaerobacter subterraneus subsp. tengcongensis (strain DSM 15242 / JCM 11007 / NBRC 100824 / MB4) (Thermoanaerobacter tengcongensis).